A 304-amino-acid chain; its full sequence is Recombination-associated protein RdgC (304 aa).

It belongs to the RdgC family.

It localises to the cytoplasm. The protein localises to the nucleoid. Its function is as follows. May be involved in recombination. The chain is Recombination-associated protein RdgC from Shewanella putrefaciens (strain CN-32 / ATCC BAA-453).